A 289-amino-acid chain; its full sequence is Oxaloacetate decarboxylase (289 aa).

Ser50 serves as a coordination point for substrate. Residue Asp88 coordinates Mg(2+). The substrate site is built by Arg159 and His235.

Belongs to the isocitrate lyase family. Oxaloacetate decarboxylase subfamily. As to quaternary structure, homotetramer; dimer of dimers. Requires Mg(2+) as cofactor.

The enzyme catalyses oxaloacetate + H(+) = pyruvate + CO2. In terms of biological role, catalyzes the decarboxylation of oxaloacetate into pyruvate. Seems to play a role in maintaining cellular concentrations of bicarbonate and pyruvate. The chain is Oxaloacetate decarboxylase from Pseudomonas fluorescens (strain SBW25).